Consider the following 225-residue polypeptide: Ribulose-phosphate 3-epimerase (225 aa).

Position 10 (serine 10) interacts with substrate. Residues histidine 35, aspartate 37, and histidine 68 each contribute to the a divalent metal cation site. Aspartate 37 serves as the catalytic Proton acceptor. Residues histidine 68, 144 to 147, and 175 to 177 each bind substrate; these read GFGG and DGG. A divalent metal cation is bound at residue aspartate 175. The active-site Proton donor is aspartate 175.

It belongs to the ribulose-phosphate 3-epimerase family. The cofactor is a divalent metal cation.

It catalyses the reaction D-ribulose 5-phosphate = D-xylulose 5-phosphate. It functions in the pathway carbohydrate degradation. Functionally, catalyzes the reversible epimerization of D-ribulose 5-phosphate to D-xylulose 5-phosphate. The protein is Ribulose-phosphate 3-epimerase of Rhodospirillum rubrum.